Here is a 99-residue protein sequence, read N- to C-terminus: DNA-binding protein Fis (99 aa).

Residues 75–94 (QTRAANMLGINRGTLRKKLK) constitute a DNA-binding region (H-T-H motif).

It belongs to the transcriptional regulatory Fis family. In terms of assembly, homodimer.

In terms of biological role, activates ribosomal RNA transcription. Plays a direct role in upstream activation of rRNA promoters. The sequence is that of DNA-binding protein Fis from Haemophilus influenzae (strain 86-028NP).